The chain runs to 377 residues: Chaperone protein DnaJ (377 aa).

The J domain occupies 6–70 (DYYKILGIDK…EKKAIYDKYG (65 aa)). Residues 143–225 (GRVISQKLDK…CKGAKKIKES (83 aa)) form a CR-type zinc finger. Residues C156, C159, C173, C176, C199, C202, C213, and C216 each contribute to the Zn(2+) site. CXXCXGXG motif repeat units follow at residues 156-163 (CESCNGTG), 173-180 (CSTCNGRG), 199-206 (CSTCNGLG), and 213-220 (CPSCKGAK).

Belongs to the DnaJ family. In terms of assembly, homodimer. Zn(2+) is required as a cofactor.

Its subcellular location is the cytoplasm. In terms of biological role, participates actively in the response to hyperosmotic and heat shock by preventing the aggregation of stress-denatured proteins and by disaggregating proteins, also in an autonomous, DnaK-independent fashion. Unfolded proteins bind initially to DnaJ; upon interaction with the DnaJ-bound protein, DnaK hydrolyzes its bound ATP, resulting in the formation of a stable complex. GrpE releases ADP from DnaK; ATP binding to DnaK triggers the release of the substrate protein, thus completing the reaction cycle. Several rounds of ATP-dependent interactions between DnaJ, DnaK and GrpE are required for fully efficient folding. Also involved, together with DnaK and GrpE, in the DNA replication of plasmids through activation of initiation proteins. This chain is Chaperone protein DnaJ, found in Mycoplasmopsis pulmonis (strain UAB CTIP) (Mycoplasma pulmonis).